Here is a 253-residue protein sequence, read N- to C-terminus: Snake venom serine proteinase 14 (253 aa).

The signal sequence occupies residues 1–18; sequence MVLIRVLANLLILQLSYA. Residues 19 to 24 constitute a propeptide that is removed on maturation; it reads QKSSEL. In terms of domain architecture, Peptidase S1 spans 25 to 244; it reads VIGGDECNIN…YTDWIQSIIA (220 aa). Cystine bridges form between Cys31–Cys158, Cys49–Cys65, Cys93–Cys251, Cys137–Cys205, Cys169–Cys184, and Cys195–Cys220. Active-site charge relay system residues include His64 and Asp105. N-linked (GlcNAc...) asparagine glycans are attached at residues Asn116, Asn117, and Asn149. Ser199 functions as the Charge relay system in the catalytic mechanism.

Belongs to the peptidase S1 family. Snake venom subfamily. Monomer. As to expression, expressed by the venom gland.

The protein resides in the secreted. Its function is as follows. Snake venom serine protease that may act in the hemostasis system of the prey. The protein is Snake venom serine proteinase 14 of Crotalus adamanteus (Eastern diamondback rattlesnake).